A 260-amino-acid chain; its full sequence is Triosephosphate isomerase (260 aa).

Position 11–13 (11–13 (NWK)) interacts with substrate. His-103 acts as the Electrophile in catalysis. The Proton acceptor role is filled by Glu-175. Substrate-binding positions include Gly-181, Ser-220, and 241–242 (GG).

It belongs to the triosephosphate isomerase family. In terms of assembly, homodimer.

Its subcellular location is the cytoplasm. The catalysed reaction is D-glyceraldehyde 3-phosphate = dihydroxyacetone phosphate. It functions in the pathway carbohydrate biosynthesis; gluconeogenesis. Its pathway is carbohydrate degradation; glycolysis; D-glyceraldehyde 3-phosphate from glycerone phosphate: step 1/1. Its function is as follows. Involved in the gluconeogenesis. Catalyzes stereospecifically the conversion of dihydroxyacetone phosphate (DHAP) to D-glyceraldehyde-3-phosphate (G3P). The chain is Triosephosphate isomerase from Shewanella sp. (strain W3-18-1).